The following is a 590-amino-acid chain: Acyl-CoA ligase sidI (590 aa).

A PTS2-type peroxisomal targeting signal motif is present at residues 6-14 (RLQQTLSHL). ATP contacts are provided by residues 220-228 (TSGSTGNPK), 359-364 (SSYGLT), Asp-449, and Arg-464. Thr-364 provides a ligand contact to substrate. CoA-binding positions include 472–474 (GGE) and 543–545 (YFF). Lys-563 contributes to the ATP binding site.

Belongs to the ATP-dependent AMP-binding enzyme family.

Its subcellular location is the peroxisome. It functions in the pathway siderophore biosynthesis. In terms of biological role, acyl-CoA ligase; part of the siderophore biosynthetic pathway. Aspergillus fumigatus produces 4 types of siderophores, low-molecular-mass iron chelators, including excreted fusarinine C (FsC) and triacetylfusarinine C (TAFC) for iron uptake and intacellular ferricrocin (FC) for hyphal and hydroxyferricrocin (HFC) for conidial iron distribution and storage. TAFC consists of 3 N(2)-acetyl-N(5)-anhydromevalonyl-N(5)-hydroxyornithine residues cyclically linked by ester bonds; FC is a cyclic hexapeptide with the structure Gly-Ser-Gly-(N(5)-acetyl-N(5)-hydroxyornithine)x3. The biosynthesis of all four siderophores depends on the hydroxylation of ornithine, catalyzed by the monooxygenase sidA. Subsequently, the pathways for biosynthesis of extra- and intracellular siderophores split. For biosynthesis of extracellular siderophores, the transacylase sidF transfers anhydromevalonyl to N(5)-hydroxyornithine. The required anhydromevalonyl-CoA moiety is derived from mevalonate by CoA ligation and dehydration catalyzed by sidI and sidH respectively. The acetylation of N(5)-hydroxyornithine for FC biosynthesis involves the constitutively expressed sidL. FC is hydroxylated to HFC by an as yet uncharacterized enzyme during conidiation. Assembly of fusarinine C (FsC) and FC is catalyzed by two different nonribosomal peptide synthetases (NRPS), sidD and sidC respectively. Subsequently, sidG catalyzes N2-acetylation of FsC for forming TAFC. Both extra- and intracellular siderophores are crucial for growth during iron limitation and virulence. The protein is Acyl-CoA ligase sidI of Aspergillus fumigatus (strain ATCC MYA-4609 / CBS 101355 / FGSC A1100 / Af293) (Neosartorya fumigata).